Reading from the N-terminus, the 323-residue chain is Mas-related G-protein coupled receptor member B4 (323 aa).

At 1–34 (MSPTTQAWSINNTVVKENYYTEILSCITTFNTLN) the chain is on the extracellular side. Residue asparagine 11 is glycosylated (N-linked (GlcNAc...) asparagine). Residues 35–55 (FLIVIISVVGMAGNATVLWLL) traverse the membrane as a helical segment. Residues 56–63 (GFHMHRNA) lie on the Cytoplasmic side of the membrane. Residues 64 to 84 (FSVYVLNLAGADFLYLCAQTV) form a helical membrane-spanning segment. The Extracellular segment spans residues 85 to 98 (YSLECVLQFDNSYF). Residues 99 to 119 (YFLLTILMFNYLAGFCMIAAI) form a helical membrane-spanning segment. At 120–147 (STERCLSVTWPIWYHCQRPRHTSATVCA) the chain is on the cytoplasmic side. The chain crosses the membrane as a helical span at residues 148–168 (LFWAFSLLLSLLLGQGCGFLF). At 169-180 (SKFDYSFCRYCN) the chain is on the extracellular side. The helical transmembrane segment at 181 to 201 (FIATAFLIVIFMVLFVSSLAL) threads the bilayer. Over 202 to 224 (LAKIICGSHRIPVTRFYVTIALT) the chain is Cytoplasmic. The chain crosses the membrane as a helical span at residues 225–245 (VLVFIFFGLPIGICVFLLPWI). Residues 246-255 (HMMLSSFFYE) lie on the Extracellular side of the membrane. Residues 256–276 (MVTLLSCVNSCANPIIYFFVG) form a helical membrane-spanning segment. The Cytoplasmic portion of the chain corresponds to 277–323 (SIRHHRLQRQTLKLLLQRAMQDTPEEEGGERGPSQKSEDLEVVRCSS). Residues 298–323 (DTPEEEGGERGPSQKSEDLEVVRCSS) are disordered. Over residues 312 to 323 (KSEDLEVVRCSS) the composition is skewed to basic and acidic residues.

Belongs to the G-protein coupled receptor 1 family. Mas subfamily. In terms of tissue distribution, expressed strongly in newborn dorsal root ganglia, adult dorsal root ganglia and trigeminal ganlia.

Its subcellular location is the membrane. Orphan receptor. Probably involved in the function of nociceptive neurons. May regulate nociceptor function and/or development, including the sensation or modulation of pain. This Rattus norvegicus (Rat) protein is Mas-related G-protein coupled receptor member B4 (Mrgprb4).